Here is a 210-residue protein sequence, read N- to C-terminus: MKIVEVRHPLVQHKIGLMRNAALSTKDFRELANELGTLLAYEATADLDTEPHTLAGWAGPVTVQRIAGAKITVVPILRAGLGMLSGVLSLIPAARVSVVGLQRDEETLQPVPYFERLTGRLEERDALILDPMLATGGTLIATIDMLKRAGARRIKGIFLVAAPEGIEAVKAVHPDVEIYTAAIDAQLNDKGYILPGLGDAGDRIFGTRVG.

Residues Arg78, Arg103, and 130-138 (DPMLATGGT) contribute to the 5-phospho-alpha-D-ribose 1-diphosphate site. Uracil contacts are provided by residues Ile193 and 198–200 (GDA). Asp199 contacts 5-phospho-alpha-D-ribose 1-diphosphate.

It belongs to the UPRTase family. Mg(2+) serves as cofactor.

It carries out the reaction UMP + diphosphate = 5-phospho-alpha-D-ribose 1-diphosphate + uracil. The protein operates within pyrimidine metabolism; UMP biosynthesis via salvage pathway; UMP from uracil: step 1/1. Allosterically activated by GTP. Functionally, catalyzes the conversion of uracil and 5-phospho-alpha-D-ribose 1-diphosphate (PRPP) to UMP and diphosphate. This is Uracil phosphoribosyltransferase from Stenotrophomonas maltophilia (strain K279a).